The primary structure comprises 220 residues: Putative glutathione S-transferase C1183.02 (220 aa).

The 80-residue stretch at 2-81 (FLGTLYSFKT…YFYEKGKHND (80 aa)) folds into the GST N-terminal domain. The GST C-terminal domain maps to 89–216 (NEVEEAEMLK…FPLELPLTVT (128 aa)).

This sequence belongs to the GST superfamily.

It is found in the cytoplasm. The enzyme catalyses RX + glutathione = an S-substituted glutathione + a halide anion + H(+). Functionally, involved in the oxidative stress response and detoxification. In Schizosaccharomyces pombe (strain 972 / ATCC 24843) (Fission yeast), this protein is Putative glutathione S-transferase C1183.02.